A 308-amino-acid polypeptide reads, in one-letter code: Glutaminase (308 aa).

Residues Ser66, Asn117, Glu161, Asn168, Tyr192, Tyr244, and Val262 each contribute to the substrate site.

The protein belongs to the glutaminase family. Homotetramer.

The catalysed reaction is L-glutamine + H2O = L-glutamate + NH4(+). The chain is Glutaminase from Photorhabdus laumondii subsp. laumondii (strain DSM 15139 / CIP 105565 / TT01) (Photorhabdus luminescens subsp. laumondii).